Consider the following 314-residue polypeptide: Olfactory receptor 1Q1 (314 aa).

The Extracellular portion of the chain corresponds to 1-25 (MDNSNWTSVSHFVLLGISTHPEEQI). Asn5 carries an N-linked (GlcNAc...) asparagine glycan. Residues 26-49 (PLFLVFSLMYAINISGNLAIITLI) traverse the membrane as a helical segment. Residues 50 to 57 (LSAPRLHI) lie on the Cytoplasmic side of the membrane. The chain crosses the membrane as a helical span at residues 58–79 (PMYIFLSNLALTDICFTSTTVP). Topologically, residues 80-100 (KMLQIIFSPTKVISYTGCLAQ) are extracellular. A disulfide bond links Cys97 and Cys189. The chain crosses the membrane as a helical span at residues 101–120 (TYFFICFAVMENFILAVMAY). The Cytoplasmic segment spans residues 121-139 (DRYIAICHPFHYTMILTRM). A helical transmembrane segment spans residues 140–158 (LCVKMVVMCHALSHLHAML). Residues 159 to 195 (HTFLIGQLIFCADNRIPHFFCDLYALMKISCTSTYLN) are Extracellular-facing. Residues 196 to 219 (TLMIHTEGAVVISGALAFITASYA) traverse the membrane as a helical segment. At 220–236 (CIILVVLRIPSAKGRWK) the chain is on the cytoplasmic side. The helical transmembrane segment at 237–259 (TFSTCGSHLTVVAIFYGTLSWVY) threads the bilayer. The Extracellular portion of the chain corresponds to 260–272 (FRPLSSYSVTKGR). A helical membrane pass occupies residues 273 to 292 (IITVVYTVVTPMLNPFIYSL). The Cytoplasmic portion of the chain corresponds to 293–314 (RNGDVKGGFMKWMSRMQTFFFR).

Belongs to the G-protein coupled receptor 1 family.

It is found in the cell membrane. Its function is as follows. Odorant receptor. This Homo sapiens (Human) protein is Olfactory receptor 1Q1 (OR1Q1).